Here is a 27-residue protein sequence, read N- to C-terminus: Fructokinase (27 aa).

The protein belongs to the ROK (NagC/XylR) family. As to quaternary structure, homodimer. It depends on Mg(2+) as a cofactor.

The enzyme catalyses D-fructose + ATP = D-fructose 6-phosphate + ADP + H(+). Its activity is regulated as follows. Inhibition by zinc ions. The polypeptide is Fructokinase (Fusobacterium mortiferum).